We begin with the raw amino-acid sequence, 245 residues long: MAAVSGTRRTRAVSPTRWIVYAGSVFAGAWLATQLFYLVQIALWSFINPGSTAFMRTDAWWLSRDKPPAQVQHQWVPYDQISRNLKRALIASEDSTFATNNGYDVDAILQAWEKNKARGRIVAGGSTITQQLARNLFLSREKSYIRKGQELIITWMLETVLDKERIFEIYLNSVEWGRGVYGAEAAARYYYRIPASRLGAWQSARLAVMLPKPRWFDAHRGSAYQAQRAAVIARRMGAAELPQSQ.

A helical membrane pass occupies residues valine 20–alanine 42.

This sequence belongs to the glycosyltransferase 51 family.

The protein resides in the cell inner membrane. It carries out the reaction [GlcNAc-(1-&gt;4)-Mur2Ac(oyl-L-Ala-gamma-D-Glu-L-Lys-D-Ala-D-Ala)](n)-di-trans,octa-cis-undecaprenyl diphosphate + beta-D-GlcNAc-(1-&gt;4)-Mur2Ac(oyl-L-Ala-gamma-D-Glu-L-Lys-D-Ala-D-Ala)-di-trans,octa-cis-undecaprenyl diphosphate = [GlcNAc-(1-&gt;4)-Mur2Ac(oyl-L-Ala-gamma-D-Glu-L-Lys-D-Ala-D-Ala)](n+1)-di-trans,octa-cis-undecaprenyl diphosphate + di-trans,octa-cis-undecaprenyl diphosphate + H(+). Its pathway is cell wall biogenesis; peptidoglycan biosynthesis. Functionally, peptidoglycan polymerase that catalyzes glycan chain elongation from lipid-linked precursors. This Burkholderia ambifaria (strain MC40-6) protein is Biosynthetic peptidoglycan transglycosylase.